We begin with the raw amino-acid sequence, 352 residues long: Eukaryotic translation initiation factor 3 subunit H (352 aa).

Residues 1 to 34 (MASRKEGTGSTATSSSSTGGAVGKGKGKGGSGDS) are disordered. S3 bears the Phosphoserine mark. The span at 8–19 (TGSTATSSSSTG) shows a compositional bias: low complexity. Over residues 20 to 32 (GAVGKGKGKGGSG) the composition is skewed to gly residues. The 135-residue stretch at 39 to 173 (VQIDGLVVLK…LKAYRLTPKL (135 aa)) folds into the MPN domain. A Phosphoserine modification is found at S183. Residues 265 to 300 (RNSSKQQQQKHQYQQRRQQENMQRQSRGEPPLPEED) are disordered. Residues 270–289 (QQQQKHQYQQRRQQENMQRQ) are compositionally biased toward low complexity. K303 participates in a covalent cross-link: Glycyl lysine isopeptide (Lys-Gly) (interchain with G-Cter in SUMO2).

This sequence belongs to the eIF-3 subunit H family. Component of the eukaryotic translation initiation factor 3 (eIF-3) complex, which is composed of 13 subunits: EIF3A, EIF3B, EIF3C, EIF3D, EIF3E, EIF3F, EIF3G, EIF3H, EIF3I, EIF3J, EIF3K, EIF3L and EIF3M. The eIF-3 complex appears to include 3 stable modules: module A is composed of EIF3A, EIF3B, EIF3G and EIF3I; module B is composed of EIF3F, EIF3H, and EIF3M; and module C is composed of EIF3C, EIF3D, EIF3E, EIF3K and EIF3L. EIF3C of module C binds EIF3B of module A and EIF3H of module B, thereby linking the three modules. EIF3J is a labile subunit that binds to the eIF-3 complex via EIF3B. The eIF-3 complex interacts with RPS6KB1 under conditions of nutrient depletion. Mitogenic stimulation leads to binding and activation of a complex composed of MTOR and RPTOR, leading to phosphorylation and release of RPS6KB1 and binding of EIF4B to eIF-3. Interacts with RNF139; the interaction leads to protein translation inhibitions in a ubiquitination-dependent manner. Interacts with DHX33; the interaction is independent of RNA.

Its subcellular location is the cytoplasm. Component of the eukaryotic translation initiation factor 3 (eIF-3) complex, which is required for several steps in the initiation of protein synthesis. The eIF-3 complex associates with the 40S ribosome and facilitates the recruitment of eIF-1, eIF-1A, eIF-2:GTP:methionyl-tRNAi and eIF-5 to form the 43S pre-initiation complex (43S PIC). The eIF-3 complex stimulates mRNA recruitment to the 43S PIC and scanning of the mRNA for AUG recognition. The eIF-3 complex is also required for disassembly and recycling of post-termination ribosomal complexes and subsequently prevents premature joining of the 40S and 60S ribosomal subunits prior to initiation. The eIF-3 complex specifically targets and initiates translation of a subset of mRNAs involved in cell proliferation, including cell cycling, differentiation and apoptosis, and uses different modes of RNA stem-loop binding to exert either translational activation or repression. The sequence is that of Eukaryotic translation initiation factor 3 subunit H (Eif3h) from Rattus norvegicus (Rat).